Consider the following 108-residue polypeptide: Translation initiation factor 1A (108 aa).

One can recognise an S1-like domain in the interval 11-85 (PSKDVPKPEE…TKADIVYRYM (75 aa)).

This sequence belongs to the eIF-1A family.

In terms of biological role, seems to be required for maximal rate of protein biosynthesis. Enhances ribosome dissociation into subunits and stabilizes the binding of the initiator Met-tRNA(I) to 40 S ribosomal subunits. The protein is Translation initiation factor 1A (eIF1A) of Metallosphaera sedula (strain ATCC 51363 / DSM 5348 / JCM 9185 / NBRC 15509 / TH2).